Reading from the N-terminus, the 311-residue chain is Serine/threonine-protein phosphatase PP1-1 (311 aa).

4 residues coordinate Mn(2+): aspartate 53, histidine 55, aspartate 82, and asparagine 114. Histidine 115 serves as the catalytic Proton donor. Residues histidine 164 and histidine 238 each coordinate Mn(2+).

This sequence belongs to the PPP phosphatase family. PP-6 (PP-V) subfamily. In terms of assembly, inactivated in a complex with phosphatase methylesterase PPE1 (PP2Ai). Interacts with phosphatase 2A activator RRD1, which can reactivate PP2Ai by dissociating the catalytic subunit from the complex. Forms a ternary complex with RRD1-TAP42. The cofactor is Mn(2+).

The protein localises to the cytoplasm. The catalysed reaction is O-phospho-L-seryl-[protein] + H2O = L-seryl-[protein] + phosphate. It carries out the reaction O-phospho-L-threonyl-[protein] + H2O = L-threonyl-[protein] + phosphate. Functionally, involved in the dephosphorylation of the large subunit of RNA polymerase II. Is required in late G1 for normal G1 cyclin expression, bud initiation and expression of certain genes that are periodically expressed during late G1. Associates with the SAP proteins in a cell cycle-dependent manner. In Saccharomyces cerevisiae (strain ATCC 204508 / S288c) (Baker's yeast), this protein is Serine/threonine-protein phosphatase PP1-1 (SIT4).